Consider the following 277-residue polypeptide: Phosphatidylglycerol--prolipoprotein diacylglyceryl transferase (277 aa).

Transmembrane regions (helical) follow at residues 22–42 (WYGV…LSEA), 51–71 (IIVD…RIYY), 89–109 (IWHG…TAII), and 116–136 (ISFW…QAIG). Position 137 (Arg-137) interacts with a 1,2-diacyl-sn-glycero-3-phospho-(1'-sn-glycerol). A run of 3 helical transmembrane segments spans residues 177-197 (QPTF…LLII), 205-225 (GELF…IEGM), and 235-255 (FRVS…LIIY).

The protein belongs to the Lgt family.

It localises to the cell membrane. The catalysed reaction is L-cysteinyl-[prolipoprotein] + a 1,2-diacyl-sn-glycero-3-phospho-(1'-sn-glycerol) = an S-1,2-diacyl-sn-glyceryl-L-cysteinyl-[prolipoprotein] + sn-glycerol 1-phosphate + H(+). The protein operates within protein modification; lipoprotein biosynthesis (diacylglyceryl transfer). Catalyzes the transfer of the diacylglyceryl group from phosphatidylglycerol to the sulfhydryl group of the N-terminal cysteine of a prolipoprotein, the first step in the formation of mature lipoproteins. The polypeptide is Phosphatidylglycerol--prolipoprotein diacylglyceryl transferase (Listeria welshimeri serovar 6b (strain ATCC 35897 / DSM 20650 / CCUG 15529 / CIP 8149 / NCTC 11857 / SLCC 5334 / V8)).